Here is a 105-residue protein sequence, read N- to C-terminus: Vitelline membrane protein Vm32E (105 aa).

Positions Met1 to Ala17 are cleaved as a signal peptide. The 38-residue stretch at Gly25–Ala62 folds into the VM domain.

The protein belongs to the vitelline membrane family.

Its subcellular location is the secreted. Functionally, major early eggshell protein. This is Vitelline membrane protein Vm32E from Drosophila ananassae (Fruit fly).